Reading from the N-terminus, the 79-residue chain is Acyl carrier protein (79 aa).

Residues 2 to 77 (SEIGERVKKI…DAVKFLEKNA (76 aa)) form the Carrier domain. S37 is modified (O-(pantetheine 4'-phosphoryl)serine).

This sequence belongs to the acyl carrier protein (ACP) family. Post-translationally, 4'-phosphopantetheine is transferred from CoA to a specific serine of apo-ACP by AcpS. This modification is essential for activity because fatty acids are bound in thioester linkage to the sulfhydryl of the prosthetic group.

Its subcellular location is the cytoplasm. It functions in the pathway lipid metabolism; fatty acid biosynthesis. In terms of biological role, carrier of the growing fatty acid chain in fatty acid biosynthesis. The protein is Acyl carrier protein of Rhodopseudomonas palustris (strain BisA53).